The following is a 763-amino-acid chain: Dual specificity tyrosine-phosphorylation-regulated kinase 1A (763 aa).

Ser-14 bears the Phosphoserine mark. Residues 32–57 (GQMPHSHQYSDRRQPNISDQQVSALS) are disordered. A compositionally biased stretch (polar residues) spans 46–57 (PNISDQQVSALS). Position 111 is a phosphotyrosine; by autocatalysis (Tyr-111). The tract at residues 115–136 (KKRRHQQGQGDDSSHKKERKVY) is disordered. A Bipartite nuclear localization signal motif is present at residues 117-134 (RRHQQGQGDDSSHKKERK). Tyr-140 is modified (phosphotyrosine; by autocatalysis). At Tyr-145 the chain carries Phosphotyrosine. Tyr-159 is modified (phosphotyrosine; by autocatalysis). A Protein kinase domain is found at 159–479 (YEIDSLIGKG…PYYALQHSFF (321 aa)). 165–173 (IGKGSFGQV) contacts ATP. Tyr-177 carries the post-translational modification Phosphotyrosine; by autocatalysis. Lys-188 provides a ligand contact to ATP. Phosphotyrosine; by autocatalysis is present on Tyr-219. 238-241 (FEML) contributes to the ATP binding site. The active-site Proton acceptor is the Asp-287. Ser-310 is subject to Phosphoserine; by autocatalysis. Phosphotyrosine; by autocatalysis is present on residues Tyr-319 and Tyr-321. A Phosphothreonine; by autocatalysis modification is found at Thr-402. The tract at residues 408–442 (TKDGKREYKPPGTRKLHNILGVETGGPGGRRAGES) is disordered. Position 449 is a phosphotyrosine; by autocatalysis (Tyr-449). Residues 485-501 (EGTNTSNSVSTSPAMEQ) show a composition bias toward polar residues. 3 disordered regions span residues 485-540 (EGTN…HSGG), 596-679 (NALH…GNQA), and 744-763 (DREESPMTGVCVQQSPVASS). Positions 502-525 (SQSSGTTSSTSSSSGGSSGTSNSG) are enriched in low complexity. Phosphoserine occurs at positions 529 and 538. Residues 595–625 (QNALHHHHGNSSHHHHHHHHHHHHHGQQALG) form a histidine-rich domain (HRD) region. The segment covering 598 to 620 (LHHHHGNSSHHHHHHHHHHHHHG) has biased composition (basic residues). Polar residues predominate over residues 634-645 (NSPTNSSSTQDS). Low complexity predominate over residues 654–672 (SMTSLSSSTTSSSTSSSST). Residues Ser-748 and Ser-758 each carry the phosphoserine modification. The segment covering 754-763 (CVQQSPVASS) has biased composition (polar residues).

The protein belongs to the protein kinase superfamily. CMGC Ser/Thr protein kinase family. MNB/DYRK subfamily. Interacts with RAD54L2/ARIP4. Interacts with CRY2. Interacts with RANBP9. Interacts with WDR68. Interacts with SIRT1. In terms of assembly, (Microbial infection) Interacts with human adenovirus 5 E1A protein. In terms of processing, autophosphorylated on numerous tyrosine residues. Can also autophosphorylate on serine and threonine residues (in vitro). As to expression, ubiquitous. Highest levels in skeletal muscle, testis, fetal lung and fetal kidney.

The protein localises to the nucleus. It is found in the nucleus speckle. The catalysed reaction is L-seryl-[protein] + ATP = O-phospho-L-seryl-[protein] + ADP + H(+). The enzyme catalyses L-threonyl-[protein] + ATP = O-phospho-L-threonyl-[protein] + ADP + H(+). It carries out the reaction L-tyrosyl-[protein] + ATP = O-phospho-L-tyrosyl-[protein] + ADP + H(+). It catalyses the reaction [DNA-directed RNA polymerase] + ATP = phospho-[DNA-directed RNA polymerase] + ADP + H(+). With respect to regulation, inhibited by RANBP9. Inhibited by harmine, leucettamine B and leucettine L41. Its function is as follows. Dual-specificity kinase which possesses both serine/threonine and tyrosine kinase activities. Exhibits a substrate preference for proline at position P+1 and arginine at position P-3. Plays an important role in double-strand breaks (DSBs) repair following DNA damage. Mechanistically, phosphorylates RNF169 and increases its ability to block accumulation of TP53BP1 at the DSB sites thereby promoting homologous recombination repair (HRR). Also acts as a positive regulator of transcription by acting as a CTD kinase that mediates phosphorylation of the CTD (C-terminal domain) of the large subunit of RNA polymerase II (RNAP II) POLR2A. May play a role in a signaling pathway regulating nuclear functions of cell proliferation. Modulates alternative splicing by phosphorylating the splice factor SRSF6. Has pro-survival function and negatively regulates the apoptotic process. Promotes cell survival upon genotoxic stress through phosphorylation of SIRT1. This in turn inhibits p53/TP53 activity and apoptosis. Phosphorylates SEPTIN4, SEPTIN5 and SF3B1 at 'Thr-434'. This Homo sapiens (Human) protein is Dual specificity tyrosine-phosphorylation-regulated kinase 1A.